The primary structure comprises 200 residues: Protein GrpE (200 aa).

The protein belongs to the GrpE family. Homodimer.

It is found in the cytoplasm. In terms of biological role, participates actively in the response to hyperosmotic and heat shock by preventing the aggregation of stress-denatured proteins, in association with DnaK and GrpE. It is the nucleotide exchange factor for DnaK and may function as a thermosensor. Unfolded proteins bind initially to DnaJ; upon interaction with the DnaJ-bound protein, DnaK hydrolyzes its bound ATP, resulting in the formation of a stable complex. GrpE releases ADP from DnaK; ATP binding to DnaK triggers the release of the substrate protein, thus completing the reaction cycle. Several rounds of ATP-dependent interactions between DnaJ, DnaK and GrpE are required for fully efficient folding. The sequence is that of Protein GrpE from Geobacter sulfurreducens (strain ATCC 51573 / DSM 12127 / PCA).